The primary structure comprises 483 residues: Dual specificity protein phosphatase CDC14C (483 aa).

Residues 1-45 form a disordered region; that stretch reads MKRKSEGRSSWAAATCSPCCSLTSPSVKKIRSPTQQDPRHRDPQD. Positions 1 to 53 match the Nucleolar localization signal motif; the sequence is MKRKSEGRSSWAAATCSPCCSLTSPSVKKIRSPTQQDPRHRDPQDDVYLDITD. The segment covering 12-26 has biased composition (low complexity); that stretch reads AAATCSPCCSLTSPS. Residues 43-197 form an a region; it reads PQDDVYLDIT…AMQYGFLNFN (155 aa). A linker region spans residues 198–211; it reads SFNLDEYEHYEKAE. The b stretch occupies residues 212-378; that stretch reads NGDLNWIIPD…EGDYFCQKLK (167 aa). One can recognise a Tyrosine-protein phosphatase domain in the interval 213 to 373; the sequence is GDLNWIIPDR…TSLWLEGDYF (161 aa). C313 functions as the Phosphocysteine intermediate in the catalytic mechanism. The disordered stretch occupies residues 407 to 426; the sequence is QDQQEPEPYSDDDEINGGTQ. Over residues 408 to 421 the composition is skewed to acidic residues; that stretch reads DQQEPEPYSDDDEI. Residues 444–466 form a helical membrane-spanning segment; sequence ILLTCPLAVLTSALCSVVIWWIV.

This sequence belongs to the protein-tyrosine phosphatase family. Non-receptor class CDC14 subfamily.

The protein localises to the membrane. Its subcellular location is the nucleus. The protein resides in the nucleolus. It is found in the cytoplasm. It localises to the cytoskeleton. It carries out the reaction O-phospho-L-tyrosyl-[protein] + H2O = L-tyrosyl-[protein] + phosphate. It catalyses the reaction O-phospho-L-seryl-[protein] + H2O = L-seryl-[protein] + phosphate. The enzyme catalyses O-phospho-L-threonyl-[protein] + H2O = L-threonyl-[protein] + phosphate. Dual-specificity phosphatase. Preferentially dephosphorylates proteins modified by proline-directed kinases. The sequence is that of Dual specificity protein phosphatase CDC14C from Symphalangus syndactylus (Siamang).